A 394-amino-acid polypeptide reads, in one-letter code: Tyrosine--tRNA ligase, cytoplasmic (394 aa).

Position 2 is an N-acetylserine (Ser2). Tyr43 provides a ligand contact to L-tyrosine. The 'HIGH' region signature appears at 48–56 (PTGRPHCGY). Tyr170, Gln174, Asp177, and Gln192 together coordinate L-tyrosine. A 'KMSKS' region motif is present at residues 227 to 231 (KMSAS). Residue Ser235 is modified to Phosphoserine. Residues 348-394 (QEASEKGYPVATPQKSKKAKKPKNKGTKYPGATKTNEIATKLEETKL) form a disordered region. Thr359 carries the post-translational modification Phosphothreonine. The Nuclear localization signal signature appears at 360 to 378 (PQKSKKAKKPKNKGTKYPG). Residues 362-373 (KSKKAKKPKNKG) are compositionally biased toward basic residues.

It belongs to the class-I aminoacyl-tRNA synthetase family. As to quaternary structure, homodimer. Interacts with KNR4/SMI1.

It is found in the cytoplasm. Its subcellular location is the nucleus. It catalyses the reaction tRNA(Tyr) + L-tyrosine + ATP = L-tyrosyl-tRNA(Tyr) + AMP + diphosphate + H(+). With respect to regulation, inhibited by N-ethylmaleimide and p-chloromercuribenzoate. In terms of biological role, catalyzes the attachment of L-tyrosine to tRNA(Tyr) in a two-step reaction: L-tyrosine is first activated by ATP to form Tyr-AMP and then transferred to the acceptor end of tRNA(Tyr). The specificity determinants on tRNA(Tyr) are the base pair C1-G72, the discriminator residue A73, and the three anticodon bases G34, U35 and A36. Also involved in nuclear tRNA export. Also attaches D-Tyr to tRNA(Tyr), this reaction is about 150-fold less efficient than attachment of L-Tyr. The chain is Tyrosine--tRNA ligase, cytoplasmic from Saccharomyces cerevisiae (strain ATCC 204508 / S288c) (Baker's yeast).